Consider the following 981-residue polypeptide: MNEDKEQKINIHDILNTRPKLTKKTALDVFFEDLDDNVITPINEYVLDSGSSSSSSIYQALKCSNNNEFVAVLLQKFQNLHIHVLEQQRRLIESKSDLLPISLHDMKYVDELINLLIIHGIDANLSPTMKIPFDSKRINTFKKGQKSAEYETPRWHTINNDTLSQVITVFYNVLTSERSSDYLREIISKGSAYANILLGLIVLHLQLPNRYSSQMITNLEDTQETYTLFGVYTLLVETIQDEKVREPILSKLTTLTLRRPENGLISLIDFVLGVRDAEDIDIEKFNRIYQILMSKPKTMTNLQYLTELFKQIYDGLTFVNRPILVTCLNGLILKFYLRNKRIVNDFLFKKVRSIIFNSPLTDHTAKELNDVINVLISLSKNSSSDLLNDLVTSCPDEDGTTPGQFFLYVWIYALFLKKNQKLDPLEINKLSISDNKSTDSIHFPEQSSSKYYEVVLSLLKSLIVITENFQYLNVLSLNLLNFEHEKWKYLIDLDTQLPYISVKNTDMAELFFEKGSKNSQISEFLQDMDLSIELFMEFLVLLNDEEQSKTLFLDILKRWVHHTKKSEKRSSDNHSGMPSVTDNALILMDLKLLECMNNRFKTKIVNKPKDVLIVIDQLIDVVQEKDETIQEVEADSDDEVEEGEETEELDPNENSSYKIILQLLSTVLSESSSSILLQNSYILKSISRKLQSFNTNASEIDALLASIDNILINGHTTERNDNIEIEMDEERLDKAITSLHDPLVPIKSYGLTELRHLAEKKSPVISLEKVLQIHLDYLKNMDPFIYLNVIKGLTTLCELEPETILPLLAEFYANKKKKNRLDDVLKVGEVFINYIQRQNELFQGKLAYLIIDTCLSIVRPNDSKPLDNRWRMSSMSILGMCLQINARGVSDRIRDMLDCVFGILQLEQPQNHLKDKDDSFLMRRSAVHLIHDLLYSTGFDLLPFEYNYDKLKTLLSYVRDQDEDYMVCEQIDKLLTVLDSL.

HEAT repeat units follow at residues 64–101 (SNNN…LLPI), 161–199 (DTLS…ILLG), 226–261 (YTLF…RRPE), 366–403 (KELN…TTPG), 609–646 (KDVL…GEET), 655–692 (SSYK…KLQS), 765–799 (ISLE…LCEL), 800–836 (EPET…NYIQ), and 945–980 (EYNY…VLDS). Residues 630 to 651 (QEVEADSDDEVEEGEETEELDP) are compositionally biased toward acidic residues. The tract at residues 630–652 (QEVEADSDDEVEEGEETEELDPN) is disordered.

It belongs to the Tango6 family. Interacts with RNA polymerase II subunits RPB2 and RPB3. Interacts with the R2TP complex. Interacts with the nuclear pore complex subunits NUP100 and NUP116.

Its subcellular location is the cytoplasm. Required for the cytoplasmic assembly and the nuclear import of RNA polymerase II. May facilitate the starting interaction between RNA polymerase II subunits RPB2 and RPB3 and the subsequent interaction of the resulting complex with subunit RPB1. May also participate in the transport of RNA polymerase II through the nuclear pore complex. This is RNA polymerase II assembly factor RTP1 from Saccharomyces cerevisiae (strain ATCC 204508 / S288c) (Baker's yeast).